A 468-amino-acid polypeptide reads, in one-letter code: Putative proline/betaine transporter (468 aa).

12 helical membrane-spanning segments follow: residues 20 to 42 (VFATGIGNAMEWFDFGVYAYTTA), 63 to 83 (FAALAIAFLLRPIGGIVFGII), 91 to 111 (VVLTTTIILMALSTLTIGVLP), 115 to 135 (MIGLWAPALLLLARILQGFST), 164 to 184 (IGTLSGYIAASIMIALLSFFL), 191 to 211 (AWGWRIPFILGLFLGLFGLYL), 246 to 266 (ILVCFVAVVFFNVTNYTVTAY), 284 to 304 (VLITCVMAVMIPLALFFGKLA), 312 to 332 (VFLIGTGGLTLLSIVAFSLLN), 336 to 356 (LPFIILGVFILGFFLSTYEAT), 376 to 396 (VTFNISVSLFGGTTPLVNSWL), and 403 to 423 (IYAPAYYLTAISIIGFIVIAV).

This sequence belongs to the major facilitator superfamily. Metabolite:H+ Symporter (MHS) family (TC 2.A.1.6) family.

It localises to the cell membrane. In terms of biological role, may be a proton symporter involved in the uptake of osmolytes such as proline and glycine betaine. This chain is Putative proline/betaine transporter (proP), found in Staphylococcus haemolyticus (strain JCSC1435).